A 1502-amino-acid polypeptide reads, in one-letter code: Rho GTPase-activating protein 5 (1502 aa).

4 FF domains span residues 267–325 (QLVV…HIEQ), 366–420 (KLME…HVQH), 427–481 (RVEM…HQRE), and 482–548 (IVEK…HIGF). At tyrosine 550 the chain carries 3'-nitrotyrosine. Residues serine 590 and serine 765 each carry the phosphoserine modification. A pG1 pseudoGTPase domain is found at 590 to 763 (STNIDKVNLF…LESVKHNLDV (174 aa)). One can recognise a pG2 pseudoGTPase domain in the interval 779–944 (RIVMCAMCGD…FSDVLEKKNM (166 aa)). Phosphoserine is present on residues serine 951 and serine 968. Disordered regions lie at residues 975 to 1004 (YNNYPDSDDDTEAPPPYSPIGDDVQLLPTP), 1022 to 1050 (HSTPNCHDHERNHKVPPPIKPKPVVPKTN), and 1069 to 1089 (NPRKQTSRVPLAHPEDMDPSD). Residues 1036 to 1045 (VPPPIKPKPV) are compositionally biased toward pro residues. Serine 1115 carries the post-translational modification Phosphoserine. Disordered stretches follow at residues 1125 to 1156 (FVNNTQGDEENGFSDRTSKSHGERRPSKYKYK) and 1168 to 1254 (YRRT…TRRN). Positions 1140–1150 (RTSKSHGERRP) are enriched in basic and acidic residues. Phosphoserine occurs at positions 1173, 1176, 1195, 1202, and 1218. In terms of domain architecture, Rho-GAP spans 1262–1449 (MPLQDLVTAE…TFIQQCQFFF (188 aa)).

In terms of assembly, may interact with RASA1/p120GAP. In terms of tissue distribution, detected in skin fibroblasts (at protein level).

It localises to the cytoplasm. The protein localises to the cell membrane. GTPase-activating protein for Rho family members. This Homo sapiens (Human) protein is Rho GTPase-activating protein 5 (ARHGAP5).